Reading from the N-terminus, the 178-residue chain is uncharacterized protein (178 aa).

This is an uncharacterized protein from Acanthamoeba polyphaga mimivirus (APMV).